A 391-amino-acid chain; its full sequence is Leucine-rich repeat-containing protein 74B (391 aa).

The tract at residues 1–38 (MKGPCEVQKNEDQEGEAAATGPQAETLEAERSWTADSH) is disordered. The segment covering 28-38 (EAERSWTADSH) has biased composition (basic and acidic residues). LRR repeat units follow at residues 106 to 126 (YIKRLDLRDNGLCGAGAEALA), 134 to 154 (IISDVDLSENQIGAAGLQAIC), 162 to 182 (TVEKMQLQGNRLEEQAAQHLA), 190 to 211 (GLKSLDLSYNQLNDLAGEILGP), 218 to 239 (GLTELNLSWNHLRGLGATAFAR), 246 to 259 (FLKVLDISHNGFGD), 274 to 294 (VLEELNMRNNRISVSGALKLG), 302 to 323 (TLRILIISKNPIRSDGCVGLLK), and 332 to 354 (ALELLDVSDIQVSRECEDLASSM). Residues 371–391 (KDWPQASTPSQPASAPSDSGL) form a disordered region. Residues 374-391 (PQASTPSQPASAPSDSGL) show a composition bias toward low complexity.

This Mus musculus (Mouse) protein is Leucine-rich repeat-containing protein 74B.